The following is a 172-amino-acid chain: Translation initiation factor IF-3 (172 aa).

It belongs to the IF-3 family. Monomer.

The protein localises to the cytoplasm. Its function is as follows. IF-3 binds to the 30S ribosomal subunit and shifts the equilibrium between 70S ribosomes and their 50S and 30S subunits in favor of the free subunits, thus enhancing the availability of 30S subunits on which protein synthesis initiation begins. The protein is Translation initiation factor IF-3 of Sulfurimonas denitrificans (strain ATCC 33889 / DSM 1251) (Thiomicrospira denitrificans (strain ATCC 33889 / DSM 1251)).